The chain runs to 110 residues: Insulin (110 aa).

The first 24 residues, 1–24 (MASLAALLPLLALLVLCRLDPAQA), serve as a signal peptide directing secretion. 3 disulfide bridges follow: cysteine 31/cysteine 96, cysteine 43/cysteine 109, and cysteine 95/cysteine 100. The propeptide at 57–87 (EVEELQVGQAELGGGPGAGGLQPSALELALQ) is c peptide.

It belongs to the insulin family. Heterodimer of a B chain and an A chain linked by two disulfide bonds.

The protein localises to the secreted. In terms of biological role, insulin decreases blood glucose concentration. It increases cell permeability to monosaccharides, amino acids and fatty acids. It accelerates glycolysis, the pentose phosphate cycle, and glycogen synthesis in liver. The sequence is that of Insulin (INS) from Oryctolagus cuniculus (Rabbit).